Here is a 236-residue protein sequence, read N- to C-terminus: UPF0502 protein Bcep1808_3727 (236 aa).

This sequence belongs to the UPF0502 family.

The protein is UPF0502 protein Bcep1808_3727 of Burkholderia vietnamiensis (strain G4 / LMG 22486) (Burkholderia cepacia (strain R1808)).